The primary structure comprises 376 residues: Galactoside alpha-(1,2)-fucosyltransferase 1 (376 aa).

Topologically, residues Met-1 to Ala-12 are cytoplasmic. The helical; Signal-anchor for type II membrane protein transmembrane segment at Phe-13–Asn-29 threads the bilayer. Over Gly-30–Ala-376 the chain is Lumenal. N-linked (GlcNAc...) asparagine glycans are attached at residues Asn-64, Asn-302, and Asn-328.

Belongs to the glycosyltransferase 11 family.

It localises to the golgi apparatus. The protein resides in the golgi stack membrane. The enzyme catalyses a beta-D-galactosyl-(1-&gt;4)-N-acetyl-beta-D-glucosaminyl derivative + GDP-beta-L-fucose = an alpha-L-Fuc-(1-&gt;2)-beta-D-Gal-(1-&gt;4)-beta-D-GlcNAc derivative + GDP + H(+). It carries out the reaction a ganglioside GA1 + GDP-beta-L-fucose = a ganglioside Fuc-GA1 + GDP + H(+). The catalysed reaction is a beta-D-Gal-(1-&gt;3)-beta-D-GlcNAc-(1-&gt;3)-beta-D-Gal-(1-&gt;4)-beta-D-Glc-(1&lt;-&gt;1')-Cer(d18:1(4E)) + GDP-beta-L-fucose = alpha-L-fucosyl-(1-&gt;2)- beta-D-galactosyl-(1-&gt;3)-N-acetyl-beta-D-glucosaminyl-(1-&gt;3)-beta-D-galactosyl-(1-&gt;4)-beta-D-glucosyl-(1&lt;-&gt;1')-N-acylsphing-4-enine + GDP + H(+). It catalyses the reaction a neolactoside nLc4Cer(d18:1(4E)) + GDP-beta-L-fucose = a neolactoside IV(2)-alpha-Fuc-nLc4Cer(d18:1(4E)) + GDP + H(+). The enzyme catalyses a ganglioside GM1 + GDP-beta-L-fucose = a ganglioside Fuc-GM1 + GDP + H(+). It carries out the reaction beta-D-galactosyl-(1-&gt;3)-N-acetyl-D-galactosamine + GDP-beta-L-fucose = alpha-L-fucosyl-(1-&gt;2)-beta-D-galactosyl-(1-&gt;3)-N-acetyl-D-galactosamine + GDP + H(+). The protein operates within protein modification; protein glycosylation. Functionally, catalyzes the transfer of L-fucose, from a guanosine diphosphate-beta-L-fucose, to the terminal galactose residue of glycoconjugates through an alpha(1,2) linkage leading to H antigen synthesis that is an intermediate substrate in the synthesis of ABO blood group antigens. H antigen is essential for maturation of the glomerular layer of the main olfactory bulb, in cell migration and early cell-cell contacts during tumor associated angiogenesis. Preferentially fucosylates soluble lactose and to a lesser extent fucosylates glycolipids gangliosides GA1 and GM1a. This Rattus norvegicus (Rat) protein is Galactoside alpha-(1,2)-fucosyltransferase 1.